A 63-amino-acid polypeptide reads, in one-letter code: MNFQNIFIFVALILAVFAGQSQAGWLKKIGKKIERVGQHTRDATIQGLGIAQQAANVAATARG.

A signal peptide spans 1-23 (MNFQNIFIFVALILAVFAGQSQA). R62 is modified (arginine amide).

Belongs to the cecropin family.

It is found in the secreted. Sarcotoxins, which are potent bactericidal proteins, are produced in response to injury. They are cytotoxic to both Gram-positive and Gram-negative bacteria. The protein is Sarcotoxin-1A of Sarcophaga peregrina (Flesh fly).